A 187-amino-acid chain; its full sequence is Peptide deformylase (187 aa).

Cys-94 and His-136 together coordinate Fe cation. Glu-137 is an active-site residue. His-140 contributes to the Fe cation binding site.

The protein belongs to the polypeptide deformylase family. Fe(2+) is required as a cofactor.

It carries out the reaction N-terminal N-formyl-L-methionyl-[peptide] + H2O = N-terminal L-methionyl-[peptide] + formate. Functionally, removes the formyl group from the N-terminal Met of newly synthesized proteins. Requires at least a dipeptide for an efficient rate of reaction. N-terminal L-methionine is a prerequisite for activity but the enzyme has broad specificity at other positions. The polypeptide is Peptide deformylase (Chlorobaculum parvum (strain DSM 263 / NCIMB 8327) (Chlorobium vibrioforme subsp. thiosulfatophilum)).